The primary structure comprises 190 residues: Putative manganese efflux pump MntP (190 aa).

Transmembrane regions (helical) follow at residues 37–57, 64–84, 111–131, 135–155, and 164–184; these read LILA…GWGI, LSFI…GVGA, LILG…MAFV, IITL…VGAW, and FGGW…GNIL.

It belongs to the MntP (TC 9.B.29) family.

It localises to the cell membrane. Functionally, probably functions as a manganese efflux pump. The protein is Putative manganese efflux pump MntP of Corynebacterium efficiens (strain DSM 44549 / YS-314 / AJ 12310 / JCM 11189 / NBRC 100395).